The sequence spans 267 residues: Tryptophan synthase alpha chain (267 aa).

Catalysis depends on proton acceptor residues Glu39 and Asp50.

It belongs to the TrpA family. As to quaternary structure, tetramer of two alpha and two beta chains.

The catalysed reaction is (1S,2R)-1-C-(indol-3-yl)glycerol 3-phosphate + L-serine = D-glyceraldehyde 3-phosphate + L-tryptophan + H2O. Its pathway is amino-acid biosynthesis; L-tryptophan biosynthesis; L-tryptophan from chorismate: step 5/5. Its function is as follows. The alpha subunit is responsible for the aldol cleavage of indoleglycerol phosphate to indole and glyceraldehyde 3-phosphate. The polypeptide is Tryptophan synthase alpha chain (Helicobacter hepaticus (strain ATCC 51449 / 3B1)).